The primary structure comprises 57 residues: Granulin-2 (57 aa).

Disulfide bonds link Cys-4/Cys-16 and Cys-10/Cys-26.

This sequence belongs to the granulin family. In terms of processing, granulins are disulfide bridged. Ubiquitous.

The protein resides in the secreted. Functionally, granulins have possible cytokine-like activity. They may play a role in inflammation, wound repair, and tissue remodeling. In Cyprinus carpio (Common carp), this protein is Granulin-2.